A 392-amino-acid polypeptide reads, in one-letter code: tRNA (guanine-N(7)-)-methyltransferase (392 aa).

Positions 123, 148, and 175 each coordinate S-adenosyl-L-methionine. Lysine 201 and aspartate 231 together coordinate substrate.

It belongs to the class I-like SAM-binding methyltransferase superfamily. TrmB family.

It catalyses the reaction guanosine(46) in tRNA + S-adenosyl-L-methionine = N(7)-methylguanosine(46) in tRNA + S-adenosyl-L-homocysteine. It functions in the pathway tRNA modification; N(7)-methylguanine-tRNA biosynthesis. In terms of biological role, catalyzes the formation of N(7)-methylguanine at position 46 (m7G46) in tRNA. The chain is tRNA (guanine-N(7)-)-methyltransferase from Campylobacter jejuni subsp. doylei (strain ATCC BAA-1458 / RM4099 / 269.97).